We begin with the raw amino-acid sequence, 261 residues long: 3-hydroxyacyl-CoA dehydrogenase type-2 (261 aa).

Alanine 2 bears the N-acetylalanine mark. NAD(+) contacts are provided by serine 20, leucine 22, and aspartate 41. An N6-acetyllysine; alternate modification is found at lysine 53. N6-succinyllysine; alternate is present on lysine 53. Valine 65 lines the NAD(+) pocket. At lysine 69 the chain carries N6-acetyllysine. Cysteine 91 contacts NAD(+). 2 positions are modified to N6-acetyllysine: lysine 99 and lysine 105. Residue serine 155 participates in substrate binding. Residues tyrosine 168, lysine 172, phenylalanine 201, and threonine 203 each coordinate NAD(+). The active-site Proton acceptor is the tyrosine 168. N6-acetyllysine; alternate is present on lysine 212. Lysine 212 carries the N6-succinyllysine; alternate modification.

The protein belongs to the short-chain dehydrogenases/reductases (SDR) family. Homotetramer. Component of mitochondrial ribonuclease P, a complex composed of TRMT10C/MRPP1, HSD17B10/MRPP2 and PRORP/MRPP3. Interacts with TRMT10C/MRPP1; forming the MRPP1-MRPP2 subcomplex of the mitochondrial ribonuclease P complex.

The protein localises to the mitochondrion. Its subcellular location is the mitochondrion matrix. The protein resides in the mitochondrion nucleoid. The catalysed reaction is a (3S)-3-hydroxyacyl-CoA + NAD(+) = a 3-oxoacyl-CoA + NADH + H(+). The enzyme catalyses (2S,3S)-3-hydroxy-2-methylbutanoyl-CoA + NAD(+) = 2-methyl-3-oxobutanoyl-CoA + NADH + H(+). It carries out the reaction testosterone + NAD(+) = androst-4-ene-3,17-dione + NADH + H(+). It catalyses the reaction 5alpha-androstane-3alpha,17beta-diol + NAD(+) = 17beta-hydroxy-5alpha-androstan-3-one + NADH + H(+). The catalysed reaction is 17beta-estradiol + NAD(+) = estrone + NADH + H(+). The enzyme catalyses cholate + NAD(+) = 3alpha,12alpha-dihydroxy-7-oxo-5beta-cholanate + NADH + H(+). It carries out the reaction (3S)-3-hydroxybutanoyl-CoA + NAD(+) = acetoacetyl-CoA + NADH + H(+). It catalyses the reaction (3S)-hydroxyoctanoyl-CoA + NAD(+) = 3-oxooctanoyl-CoA + NADH + H(+). The catalysed reaction is (3S)-hydroxyhexadecanoyl-CoA + NAD(+) = 3-oxohexadecanoyl-CoA + NADH + H(+). The enzyme catalyses 17beta-hydroxy-5alpha-androstan-3-one + NAD(+) = 5alpha-androstan-3,17-dione + NADH + H(+). It carries out the reaction 5alpha-pregnan-20beta-ol-3-one + NAD(+) = 5alpha-pregnane-3,20-dione + NADH + H(+). It catalyses the reaction 3alpha-hydroxy-5alpha-pregnan-20-one + NAD(+) = 5alpha-pregnane-3,20-dione + NADH + H(+). The catalysed reaction is cortisone + NAD(+) = 17alpha-hydroxypregn-4-en-3,11,20-trione-21-al + NADH + H(+). The enzyme catalyses 11-dehydrocorticosterone + NAD(+) = pregn-4-ene-3,11,20,21-tetraone + NADH + H(+). It carries out the reaction cortisol + NAD(+) = 11beta,17alpha-dihydroxypregn-4-ene-3,20,21-trione + NADH + H(+). It catalyses the reaction chenodeoxycholate + NAD(+) = 7-oxolithocholate + NADH + H(+). The catalysed reaction is ursodeoxycholate + NAD(+) = 7-oxolithocholate + NADH + H(+). The enzyme catalyses 3beta,7beta-dihydroxy-5beta-cholan-24-oate + NAD(+) = 3beta-hydroxy-7-oxo-5beta-cholan-24-oate + NADH + H(+). It functions in the pathway amino-acid degradation; L-isoleucine degradation. Its pathway is lipid metabolism; fatty acid beta-oxidation. The protein operates within steroid metabolism. It participates in lipid metabolism; bile acid biosynthesis. Functionally, mitochondrial dehydrogenase involved in pathways of fatty acid, branched-chain amino acid and steroid metabolism. Acts as (S)-3-hydroxyacyl-CoA dehydrogenase in mitochondrial fatty acid beta-oxidation, a major degradation pathway of fatty acids. Catalyzes the third step in the beta-oxidation cycle, namely the reversible conversion of (S)-3-hydroxyacyl-CoA to 3-ketoacyl-CoA. Preferentially accepts straight medium- and short-chain acyl-CoA substrates with highest efficiency for (3S)-hydroxybutanoyl-CoA. Acts as 3-hydroxy-2-methylbutyryl-CoA dehydrogenase in branched-chain amino acid catabolic pathway. Catalyzes the oxidation of 3-hydroxy-2-methylbutanoyl-CoA into 2-methyl-3-oxobutanoyl-CoA, a step in isoleucine degradation pathway. Has hydroxysteroid dehydrogenase activity toward steroid hormones and bile acids. Catalyzes the oxidation of 3alpha-, 17beta-, 20beta- and 21-hydroxysteroids and 7alpha- and 7beta-hydroxy bile acids. Oxidizes allopregnanolone/brexanolone at the 3alpha-hydroxyl group, which is known to be critical for the activation of gamma-aminobutyric acid receptors (GABAARs) chloride channel. Has phospholipase C-like activity toward cardiolipin and its oxidized species. Likely oxidizes the 2'-hydroxyl in the head group of cardiolipin to form a ketone intermediate that undergoes nucleophilic attack by water and fragments into diacylglycerol, dihydroxyacetone and orthophosphate. Has higher affinity for cardiolipin with oxidized fatty acids and may degrade these species during the oxidative stress response to protect cells from apoptosis. By interacting with intracellular amyloid-beta, it may contribute to the neuronal dysfunction associated with Alzheimer disease (AD). Essential for structural and functional integrity of mitochondria. In terms of biological role, in addition to mitochondrial dehydrogenase activity, moonlights as a component of mitochondrial ribonuclease P, a complex that cleaves tRNA molecules in their 5'-ends. Together with TRMT10C/MRPP1, forms a subcomplex of the mitochondrial ribonuclease P, named MRPP1-MRPP2 subcomplex, which displays functions that are independent of the ribonuclease P activity. The MRPP1-MRPP2 subcomplex catalyzes the formation of N(1)-methylguanine and N(1)-methyladenine at position 9 (m1G9 and m1A9, respectively) in tRNAs; HSD17B10/MRPP2 acting as a non-catalytic subunit. The MRPP1-MRPP2 subcomplex also acts as a tRNA maturation platform: following 5'-end cleavage by the mitochondrial ribonuclease P complex, the MRPP1-MRPP2 subcomplex enhances the efficiency of 3'-processing catalyzed by ELAC2, retains the tRNA product after ELAC2 processing and presents the nascent tRNA to the mitochondrial CCA tRNA nucleotidyltransferase TRNT1 enzyme. Associates with mitochondrial DNA complexes at the nucleoids to initiate RNA processing and ribosome assembly. The polypeptide is 3-hydroxyacyl-CoA dehydrogenase type-2 (Hsd17b10) (Rattus norvegicus (Rat)).